Consider the following 1936-residue polypeptide: Trinucleotide repeat-containing gene 6C protein (1936 aa).

The span at 1–31 (MEEKKKKKQEEKKKKEGAQKKAADQKTKVPE) shows a compositional bias: basic and acidic residues. Disordered regions lie at residues 1–160 (MEEK…PTYR), 181–256 (PSIT…NSNG), 366–412 (PQES…AMQT), 439–931 (NGSS…IRRK), 961–1063 (VIQS…VAFG), and 1115–1139 (ESTS…KTSG). Residues 34-44 (KTCSSQPQPAG) show a composition bias toward polar residues. Low complexity predominate over residues 45 to 57 (TSTSTSTSTISSS). Over residues 58–71 (NNGKRASASGQQPA) the composition is skewed to polar residues. The segment covering 76–88 (LPREVPPRFRQQE) has biased composition (basic and acidic residues). Composition is skewed to polar residues over residues 100–111 (PTGTLTSVSPTQ) and 183–217 (ITGT…GSAQ). The tract at residues 211-1133 (MATGSAQGNF…GNAPKKGLQK (923 aa)) is sufficient for interaction with argonaute family proteins. Low complexity predominate over residues 218–235 (GNFTGHTKKTNGNNGTNG). Residues 366–393 (PQESTEPQTSTSQNVSFSAQPQNLNTDG) are compositionally biased toward polar residues. Composition is skewed to low complexity over residues 394-408 (PNNT…NPIN), 439-453 (NGSS…SAEG), and 469-480 (GNSNSGFSQGNG). The segment covering 481 to 498 (DTVNSALSAKQNGSSSAV) has biased composition (polar residues). Residue R523 is modified to Omega-N-methylarginine. The span at 572–585 (GWESPSVTSQNPTV) shows a compositional bias: polar residues. The span at 594 to 614 (SWAKAASSGTTASEGSSDGSG) shows a compositional bias: low complexity. Positions 625 to 636 (GTGEGRRRDKGI) are enriched in basic and acidic residues. The span at 654–669 (LSNTGWGQTPVKQNTA) shows a compositional bias: polar residues. Positions 674–684 (ESPRSERKNDN) are enriched in basic and acidic residues. At S675 the chain carries Phosphoserine. The span at 694-718 (TQASNSGGKNDGSIMNSTNTSSVSG) shows a compositional bias: polar residues. Composition is skewed to low complexity over residues 720-730 (VNAPPAAVPAN) and 750-772 (SISS…SGAA). Polar residues-rich tracts occupy residues 834–866 (NRSG…TNWG) and 873–888 (PQQN…NVSN). A Phosphoserine modification is found at S924. Positions 964–982 (SSTTTNTTTTTTTTTSNTT) are enriched in low complexity. T987 is modified (phosphothreonine). A compositionally biased stretch (polar residues) spans 1021 to 1035 (ENSWGEPSSPSTLVD). One can recognise a UBA domain in the interval 1140-1185 (KQDEAWIMSRLIKQLTDMGFPREPAEEALKSNNMNLDQAMSALLEK). S1218 bears the Phosphoserine mark. 4 disordered regions span residues 1291–1312 (AAQA…NSSQ), 1419–1658 (VKQP…PSSS), 1689–1732 (STWS…PSST), and 1848–1869 (TSSW…GSSH). Positions 1388-1419 (MRQQEQQVARTITNLQQQIQQHQRQLAQALLV) form a coiled coil. Residues 1421 to 1430 (QPPPPPPPPH) are compositionally biased toward pro residues. Positions 1467–1936 (NTFAPYPLAG…PGDLLSGESL (470 aa)) are silencing domain; interaction with CNOT1 and PAN3. Positions 1496–1515 (DPSQSQSRLPQWTHPNSMDN) are enriched in polar residues. The segment at 1578 to 1624 (KSDSDKISNGSSINWPPEFHPGVPWKGLQNIDPENDPDVTPGSVPTG) is required for interaction with PABPC1. A sufficient for translational repression when tethered to a target mRNA region spans residues 1578 to 1936 (KSDSDKISNG…PGDLLSGESL (359 aa)). The segment at 1588–1606 (SSINWPPEFHPGVPWKGLQ) is PABPC1-interacting motif-2 (PAM2). Positions 1623–1633 (TGPTINTTIQD) are enriched in polar residues. Residues 1641–1658 (SGGSSPPSSQNATLPSSS) are compositionally biased toward low complexity. Positions 1689-1703 (STWSSGPTSHTQASL) are enriched in polar residues. Positions 1811–1878 (AQKSLHMCVL…HGLVRSDAGH (68 aa)) constitute an RRM domain. The interval 1842 to 1936 (GQALPPTSSW…PGDLLSGESL (95 aa)) is interaction with the CCR4-NOT complex. Residues 1848–1865 (TSSWQSSSASSQPRLSAA) are compositionally biased toward low complexity.

The protein belongs to the GW182 family. As to quaternary structure, interacts with one or more of the argonaute family proteins AGO1, AGO2, AGO3 and AGO4. Interacts with PABPC1 and EIF4G1. Interacts with CNOT1; the interaction is direct and mediates the association with the CCR4-NOT complex. Interacts with PAN3; the interaction mediates the association with the PAN complex.

Its function is as follows. Plays a role in RNA-mediated gene silencing by micro-RNAs (miRNAs). Required for miRNA-dependent translational repression of complementary mRNAs by argonaute family proteins. As scaffoldng protein associates with argonaute proteins bound to partially complementary mRNAs and simultaneously can recruit CCR4-NOT and PAN deadenylase complexes. The sequence is that of Trinucleotide repeat-containing gene 6C protein (TNRC6C) from Homo sapiens (Human).